Here is a 145-residue protein sequence, read N- to C-terminus: Secreted RxLR effector protein 100 (145 aa).

A signal peptide spans 1–19 (MRYLLLTFFTFHCQMVADA). The RxLR motif lies at 27 to 30 (RLLR). Residues 38–77 (SGEGKIEEAGMIVTTGAPTPENETMEHNEVPQSTTDTDQK) form a disordered region. N-linked (GlcNAc...) asparagine glycosylation is present at Asn59.

It belongs to the RxLR effector family.

The protein resides in the secreted. It localises to the host nucleus. Secreted effector that dos not suppress the host cell death induced by cell death-inducing proteins. In Plasmopara viticola (Downy mildew of grapevine), this protein is Secreted RxLR effector protein 100.